A 67-amino-acid chain; its full sequence is Large ribosomal subunit protein bL35 (67 aa).

A compositionally biased stretch (basic residues) spans 1–16 (MPKMKTKSSAKKRFRV). The segment at 1–24 (MPKMKTKSSAKKRFRVRPGGTVKR) is disordered.

It belongs to the bacterial ribosomal protein bL35 family.

In Delftia acidovorans (strain DSM 14801 / SPH-1), this protein is Large ribosomal subunit protein bL35.